Here is a 371-residue protein sequence, read N- to C-terminus: Putrescine N-methyltransferase 2 (371 aa).

Composition is skewed to polar residues over residues 1–14 (MEVISTNTNGSTIF) and 23–70 (GHQN…HDNG). Positions 1 to 70 (MEVISTNTNG…QNGTISHDNG (70 aa)) are disordered. Residues 82–319 (PGWFSEFSAL…GVIGYMLCST (238 aa)) enclose the PABS domain. S-adenosyl-L-methionine is bound by residues Gln113, Glu188, and 219–220 (DG). Catalysis depends on Asp238, which acts as the Proton acceptor. Residue Tyr307 coordinates S-adenosyl-L-methionine.

The protein belongs to the class I-like SAM-binding methyltransferase superfamily. Spermidine/spermine synthase family. Mainly expressed in roots.

It catalyses the reaction putrescine + S-adenosyl-L-methionine = N-methylputrescine + S-adenosyl-L-homocysteine + H(+). It participates in alkaloid biosynthesis; nicotine biosynthesis. Involved in the biosynthesis of pyridine alkaloid natural products, leading mainly to the production of anabasine, anatabine, nicotine and nornicotine, effective deterrents against herbivores with antiparasitic and pesticide properties (neurotoxins); nornicotine serves as the precursor in the synthesis of the carcinogen compound N'-nitrosonornicotine (NNN). Methyltransferase that mediates the conversion of putrescine to N-methylputrescine. The chain is Putrescine N-methyltransferase 2 from Nicotiana attenuata (Coyote tobacco).